The chain runs to 203 residues: Small ribosomal subunit protein uS4 (203 aa).

One can recognise an S4 RNA-binding domain in the interval 93–158; the sequence is LRLDNVVYRL…QQLVTRFLDL (66 aa).

The protein belongs to the universal ribosomal protein uS4 family. In terms of assembly, part of the 30S ribosomal subunit. Contacts protein S5. The interaction surface between S4 and S5 is involved in control of translational fidelity.

Functionally, one of the primary rRNA binding proteins, it binds directly to 16S rRNA where it nucleates assembly of the body of the 30S subunit. Its function is as follows. With S5 and S12 plays an important role in translational accuracy. This is Small ribosomal subunit protein uS4 from Akkermansia muciniphila (strain ATCC BAA-835 / DSM 22959 / JCM 33894 / BCRC 81048 / CCUG 64013 / CIP 107961 / Muc).